Consider the following 558-residue polypeptide: Nucleoprotein (558 aa).

A binding site for the cap structure m7GTP region spans residues Met54 to Ile237. Mg(2+) is bound by residues Asp382 and Glu384. Positions 382 and 384 each coordinate Mn(2+). Glu392, Cys499, His502, and Cys518 together coordinate Zn(2+). Position 522 (Asp522) interacts with Mg(2+). Asp522 is a binding site for Mn(2+).

The protein belongs to the arenaviridae nucleocapsid protein family. As to quaternary structure, homomultimerizes to form the nucleocapsid. Binds to viral genomic RNA. Interacts with glycoprotein G2. Interacts with protein Z; this interaction probably directs the encapsidated genome to budding sites. Interacts with protein L; this interaction does not interfere with Z-L interaction. Interacts with host IKBKE (via Protein kinase domain); the interaction inhibits IKBKE kinase activity.

The protein localises to the virion. The protein resides in the host cytoplasm. Encapsidates the genome, protecting it from nucleases. The encapsidated genomic RNA is termed the nucleocapsid (NC). Serves as template for viral transcription and replication. The increased presence of protein N in host cell does not seem to trigger the switch from transcription to replication as observed in other negative strain RNA viruses. Through the interaction with host IKBKE, strongly inhibits the phosphorylation and nuclear translocation of host IRF3, a protein involved in interferon activation pathway, leading to the inhibition of interferon-beta and IRF3-dependent promoters activation. Also encodes a functional 3'-5' exoribonuclease that degrades preferentially dsRNA substrates and thereby participates in the suppression of interferon induction. The chain is Nucleoprotein from Lymphocytic choriomeningitis virus (strain Armstrong) (LCMV).